The following is a 336-amino-acid chain: Vacuolar protein sorting-associated protein 26B (336 aa).

Residues Ser-302, Ser-304, and Ser-319 each carry the phosphoserine modification.

This sequence belongs to the VPS26 family. In terms of assembly, component of the heterotrimeric retromer cargo-selective complex (CSC), also described as vacuolar protein sorting VPS subcomplex (VPS,) formed by VPS26 (VPS26A or VPS26B), VPS29 and VPS35. The CSC has a highly elongated structure with VPS26 and VPS29 binding independently at opposite distal ends of VPS35 as central platform. The CSC is believed to associate with variable sorting nexins to form functionally distinct retromer complex variants. The originally described retromer complex (also called SNX-BAR retromer) is a pentamer containing the CSC and a heterodimeric membrane-deforming subcomplex formed between SNX1 or SNX2 and SNX5 or SNX6 (also called SNX-BAR subcomplex); the respective CSC and SNX-BAR subcomplexes associate with low affinity. The CSC associates with SNX3 to form a SNX3-retromer complex. The CSC associates with SNX27, the WASH complex and the SNX-BAR subcomplex to form the SNX27-retromer complex. Interacts with VPS29, VPS35, TBC1D5, GOLPH3, SNX27.

Its subcellular location is the cytoplasm. It localises to the membrane. The protein resides in the early endosome. It is found in the late endosome. In terms of biological role, acts as a component of the retromer cargo-selective complex (CSC). The CSC is believed to be the core functional component of retromer or respective retromer complex variants acting to prevent missorting of selected transmembrane cargo proteins into the lysosomal degradation pathway. The recruitment of the CSC to the endosomal membrane involves RAB7A and SNX3. The SNX-BAR retromer mediates retrograde transport of cargo proteins from endosomes to the trans-Golgi network (TGN) and is involved in endosome-to-plasma membrane transport for cargo protein recycling. The SNX3-retromer mediates the retrograde transport of WLS distinct from the SNX-BAR retromer pathway. The SNX27-retromer is believed to be involved in endosome-to-plasma membrane trafficking and recycling of a broad spectrum of cargo proteins. The CSC seems to act as recruitment hub for other proteins, such as the WASH complex and TBC1D5. May be involved in retrograde transport of SORT1 but not of IGF2R. Acts redundantly with VSP26A in SNX-27 mediated endocytic recycling of SLC2A1/GLUT1. The polypeptide is Vacuolar protein sorting-associated protein 26B (VPS26B) (Homo sapiens (Human)).